The chain runs to 98 residues: U-scoloptoxin(16)-Er9a (98 aa).

A signal peptide spans 1–24; the sequence is MVSYLCMSVSSGWLSIGKIAIKDG.

Belongs to the scoloptoxin-16 family. Post-translationally, contains 4 disulfide bonds. In terms of tissue distribution, expressed by the venom gland.

The protein localises to the secreted. The chain is U-scoloptoxin(16)-Er9a from Ethmostigmus rubripes (Giant centipede).